Here is a 569-residue protein sequence, read N- to C-terminus: uncharacterized protein (569 aa).

An N-terminal signal peptide occupies residues 1 to 24 (MKFQRKYWGLLSTLGVSSAVALSA). C25 carries the N-palmitoyl cysteine lipid modification. A lipid anchor (S-diacylglycerol cysteine) is attached at C25. Disordered regions lie at residues 111-137 (SNMKTASVSSSSSSTGNNGSTEDEWEV) and 242-267 (GKNGTQVKKMTTDSSSTQQSEEKKIE). Low complexity-rich tracts occupy residues 119–130 (SSSSSSTGNNGS) and 249–260 (KKMTTDSSSTQQ).

It to M.pneumoniae MPN_456 and M.genitalium MG321 N-terminal region.

The protein localises to the cell membrane. This is an uncharacterized protein from Mycoplasma pneumoniae (strain ATCC 29342 / M129 / Subtype 1) (Mycoplasmoides pneumoniae).